The following is a 319-amino-acid chain: Thioredoxin reductase (319 aa).

An FAD-binding site is contributed by E37–Q44. A disulfide bridge links C136 with C139. An FAD-binding site is contributed by D279–I288.

The protein belongs to the class-II pyridine nucleotide-disulfide oxidoreductase family. In terms of assembly, homodimer. The cofactor is FAD.

The protein localises to the cytoplasm. The catalysed reaction is [thioredoxin]-dithiol + NADP(+) = [thioredoxin]-disulfide + NADPH + H(+). This is Thioredoxin reductase (trxB) from Listeria innocua serovar 6a (strain ATCC BAA-680 / CLIP 11262).